The sequence spans 387 residues: Pepsin II-1 (387 aa).

The first 15 residues, 1–15 (MKWLLLLGLLALSEC), serve as a signal peptide directing secretion. A propeptide spans 16–59 (IVHKVPLVRKKSLRKNLIEKGLLQDYLKTHTPNLATKYFPKETF) (activation peptide). The Peptidase A1 domain maps to 75 to 384 (YFGTISIGTP…DRANNQVGLA (310 aa)). The active site involves Asp93. The cysteines at positions 106 and 111 are disulfide-linked. Ser129 is subject to Phosphoserine. Residues Cys267 and Cys271 are joined by a disulfide bond. The active site involves Asp276. Cys310 and Cys343 are oxidised to a cystine.

Belongs to the peptidase A1 family.

The protein localises to the secreted. It catalyses the reaction Preferential cleavage: hydrophobic, preferably aromatic, residues in P1 and P1' positions. Cleaves 1-Phe-|-Val-2, 4-Gln-|-His-5, 13-Glu-|-Ala-14, 14-Ala-|-Leu-15, 15-Leu-|-Tyr-16, 16-Tyr-|-Leu-17, 23-Gly-|-Phe-24, 24-Phe-|-Phe-25 and 25-Phe-|-Tyr-26 bonds in the B chain of insulin.. Its function is as follows. Shows particularly broad specificity; although bonds involving phenylalanine and leucine are preferred, many others are also cleaved to some extent. The chain is Pepsin II-1 from Oryctolagus cuniculus (Rabbit).